A 78-amino-acid polypeptide reads, in one-letter code: Large ribosomal subunit protein bL28 (78 aa).

This sequence belongs to the bacterial ribosomal protein bL28 family.

This Histophilus somni (strain 129Pt) (Haemophilus somnus) protein is Large ribosomal subunit protein bL28.